Reading from the N-terminus, the 589-residue chain is Outer envelope protein 64, chloroplastic (589 aa).

Position 1 (M1) is a topological domain, chloroplast intermembrane. Residues 2–22 (ASQAANLWVLLGLGLAGILML) form a helical membrane-spanning segment. Residues 23–141 (TKKLKKTVRE…NPAAPTRIPG (119 aa)) are Cytoplasmic-facing. The chain crosses the membrane as a helical span at residues 142–162 (GACSGAAVAVATNAVDFALGI). Topologically, residues 163 to 398 (DTVGGVRVPA…EITSEDYQNR (236 aa)) are chloroplast intermembrane. A helical membrane pass occupies residues 399–419 (ASSLLSIASISGCCQVTVPLG). Residues 420–589 (HHEKCPISVS…LSAERLRKFQ (170 aa)) lie on the Cytoplasmic side of the membrane. TPR repeat units lie at residues 474–507 (AEIA…SDNN), 508–541 (ATYY…DKKN), and 542–575 (VKAY…EPNN).

In terms of assembly, part of the Toc complex and of the intermembrane space complex. As to expression, expressed in roots, cotyledons, leaves and flower buds.

It localises to the plastid. Its subcellular location is the chloroplast outer membrane. Chaperone receptor mediating Hsp90-dependent protein targeting to chloroplasts. Bi-functional preprotein receptor acting on both sides of the membrane. Not essential for an efficient import of pre-proteins into plastids. The polypeptide is Outer envelope protein 64, chloroplastic (OEP64) (Arabidopsis thaliana (Mouse-ear cress)).